Reading from the N-terminus, the 479-residue chain is MASQVSLTAQGSGLSAPLNGPEHLTSTTVENDPRLLDILSRFNREKIPERAVHARGAGAYGEFEVTHDVSDICDIDMLLGIGKKTPCAVRFSTTALERGSAESVRDVKGMAIKLFTGDGEWDWVCLNIPMFFIRDPSKFPDLVHAQRPDPATNLANPAAWWEFVCNNHESLHMAVFLFTDFGTMFDYRSMSGYVSHAYKWVMPDGTWKYVHWFLASDQGPNFEQGNQTREAAPNDSESATRDLYQSLERGECPSWTVKVQVIDPEDAPRLAFNILDVSKHWNLGNYPPDIPVIPERCVGKLTLKKGPENYFEEIEKLAFSPSHLVHGVEPSEDPMLQARLFAYPDAQEHRLGPQFSDMAAKRTGHAANDAPKTKKPAVPLQKQSREHAEWVSQVTSSSWSQPNETDYKFPRELWAALPRLRGEEFQNRLVVNMAESVSQIPEDLRQKVYKTLALVAEDLASRVESLTEEMVVPEQRPRL.

Positions 1–13 (MASQVSLTAQGSG) are enriched in polar residues. The interval 1–28 (MASQVSLTAQGSGLSAPLNGPEHLTSTT) is disordered. Residue histidine 53 is part of the active site. Tyrosine 343 provides a ligand contact to heme. Positions 365 to 385 (HAANDAPKTKKPAVPLQKQSR) are disordered.

Belongs to the catalase family. Heme serves as cofactor.

It participates in alkaloid biosynthesis; ergot alkaloid biosynthesis. Functionally, catalase; part of the gene cluster that mediates the biosynthesis of fungal ergot alkaloid. DmaW catalyzes the first step of ergot alkaloid biosynthesis by condensing dimethylallyl diphosphate (DMAP) and tryptophan to form 4-dimethylallyl-L-tryptophan. The second step is catalyzed by the methyltransferase easF that methylates 4-dimethylallyl-L-tryptophan in the presence of S-adenosyl-L-methionine, resulting in the formation of 4-dimethylallyl-L-abrine. The catalase easC and the FAD-dependent oxidoreductase easE then transform 4-dimethylallyl-L-abrine to chanoclavine-I which is further oxidized by easD in the presence of NAD(+), resulting in the formation of chanoclavine-I aldehyde. Agroclavine dehydrogenase easG then mediates the conversion of chanoclavine-I aldehyde to agroclavine via a non-enzymatic adduct reaction: the substrate is an iminium intermediate that is formed spontaneously from chanoclavine-I aldehyde in the presence of glutathione. Further conversion of agroclavine to paspalic acid is a two-step process involving oxidation of agroclavine to elymoclavine and of elymoclavine to paspalic acid, the second step being performed by the elymoclavine oxidase cloA. However, cloA does not encode a functional enzyme indicating that C.fusiformis terminates its ergot alkaloid pathway at elymoclavine. The sequence is that of Catalase easC from Claviceps fusiformis (Ergot fungus).